We begin with the raw amino-acid sequence, 398 residues long: uncharacterized protein (398 aa).

A run of 2 helical transmembrane segments spans residues 31 to 51 and 56 to 76; these read VVFS…CLLF and AFIT…FFGC.

Belongs to the chlamydial CPn_0129/CT_036/TC_0306 family.

The protein resides in the cell membrane. This is an uncharacterized protein from Chlamydia muridarum (strain MoPn / Nigg).